Reading from the N-terminus, the 488-residue chain is Stress activated transcription factor atfs-1 (488 aa).

Residues 1-23 constitute a mitochondrion transit peptide; it reads MFSRVGRLTTFGAQAVSNCPFRR. The interval 138–191 is disordered; sequence SWQNGSSVGHPHGHQQQQQTCQQPPTHSSTTETMHDFSNFGDNMGSPLFQSPSK. A compositionally biased stretch (low complexity) spans 142–168; that stretch reads GSSVGHPHGHQQQQQTCQQPPTHSSTT. A Glycyl lysine isopeptide (Lys-Gly) (interchain with G-Cter in smo-1) cross-link involves residue K342. Residues 353–400 are disordered; it reads QRDDDDEDYIPASEARRTSSRLNRKSATPTYLRRRDSERSWTPASDDY. The region spanning 420-483 is the bZIP domain; sequence DEETDRRRML…NSMKKELRKM (64 aa). The interval 425–460 is basic motif; it reads RRRMLNRIAAVRYREKKRAEKKGRKMEFQEVADRNR. A Nuclear localization signal motif is present at residues 436-441; that stretch reads RYREKK. Residues 462–469 are leucine-zipper; that stretch reads LLQKERQL.

The protein belongs to the bZIP family. In terms of processing, may be desumoylated by ulp-4. As to expression, ubiquitously expressed.

Its subcellular location is the mitochondrion matrix. It localises to the cytoplasm. The protein localises to the nucleus. In terms of biological role, acts as a transcription factor during mitochondrial stress by activating the mitochondrial unfolded protein response (mtUPR). Induces nuclear and mitochondrial gene transcription, including genes coding for mitochondrial chaperones and proteins involved in glycolysis, amino acid catabolism and innate immunity. Following mitochondrial stress, restores mitochondrial respiratory capacity by limiting the transcription of oxidative phosphorylation (OXPHOS) machinery genes and by promoting the assembly of OXPHOS complexes via the up-regulation of chaperone and assembly factor genes. Component of a feedback loop involving atfs-1, atgl-1 and hlh-11. Acts together with flp-7 to negatively regulate the expression of the transcription regulator hlh-11, to promote expression of atgl-1, and thus atgl-1-dependent fat oxidation in response to mitochondrial stress. In addition, functions with hlh-11 to maintain lifespan. Promotes mtDNA maintenance and propagation of deleterious mtDNA. This Caenorhabditis elegans protein is Stress activated transcription factor atfs-1.